The chain runs to 270 residues: 3-methyl-2-oxobutanoate hydroxymethyltransferase (270 aa).

Mg(2+)-binding residues include Asp50 and Asp89. Residues 50–51 (DS), Asp89, and Lys118 each bind 3-methyl-2-oxobutanoate. Glu120 provides a ligand contact to Mg(2+). The Proton acceptor role is filled by Glu187.

It belongs to the PanB family. Homodecamer; pentamer of dimers. The cofactor is Mg(2+).

The protein localises to the cytoplasm. It catalyses the reaction 3-methyl-2-oxobutanoate + (6R)-5,10-methylene-5,6,7,8-tetrahydrofolate + H2O = 2-dehydropantoate + (6S)-5,6,7,8-tetrahydrofolate. It functions in the pathway cofactor biosynthesis; (R)-pantothenate biosynthesis; (R)-pantoate from 3-methyl-2-oxobutanoate: step 1/2. In terms of biological role, catalyzes the reversible reaction in which hydroxymethyl group from 5,10-methylenetetrahydrofolate is transferred onto alpha-ketoisovalerate to form ketopantoate. The sequence is that of 3-methyl-2-oxobutanoate hydroxymethyltransferase from Helicobacter pylori (strain G27).